Reading from the N-terminus, the 198-residue chain is Small ribosomal subunit protein uS4 (198 aa).

An S4 RNA-binding domain is found at Ser-91–Leu-154.

The protein belongs to the universal ribosomal protein uS4 family. In terms of assembly, part of the 30S ribosomal subunit. Contacts protein S5. The interaction surface between S4 and S5 is involved in control of translational fidelity.

One of the primary rRNA binding proteins, it binds directly to 16S rRNA where it nucleates assembly of the body of the 30S subunit. Functionally, with S5 and S12 plays an important role in translational accuracy. The sequence is that of Small ribosomal subunit protein uS4 from Aster yellows witches'-broom phytoplasma (strain AYWB).